A 387-amino-acid chain; its full sequence is 3-ketoacyl-CoA thiolase (387 aa).

The Acyl-thioester intermediate role is filled by Cys-91. Active-site proton acceptor residues include His-343 and Cys-373.

This sequence belongs to the thiolase-like superfamily. Thiolase family. In terms of assembly, heterotetramer of two alpha chains (FadB) and two beta chains (FadA).

Its subcellular location is the cytoplasm. The enzyme catalyses an acyl-CoA + acetyl-CoA = a 3-oxoacyl-CoA + CoA. It functions in the pathway lipid metabolism; fatty acid beta-oxidation. Functionally, catalyzes the final step of fatty acid oxidation in which acetyl-CoA is released and the CoA ester of a fatty acid two carbons shorter is formed. The sequence is that of 3-ketoacyl-CoA thiolase from Serratia proteamaculans (strain 568).